The sequence spans 147 residues: Large ribosomal subunit protein uL15 (147 aa).

A disordered region spans residues 1 to 57 (MKLHELKSAPKSRNHKAKVVGRGHGSGLGKTSGRGQKGQKARKSGRTRPGFEGGQTP). The segment covering 10 to 21 (PKSRNHKAKVVG) has biased composition (basic residues). Residues 22–36 (RGHGSGLGKTSGRGQ) show a composition bias toward gly residues. The segment covering 37-46 (KGQKARKSGR) has biased composition (basic residues).

It belongs to the universal ribosomal protein uL15 family. In terms of assembly, part of the 50S ribosomal subunit.

Functionally, binds to the 23S rRNA. This chain is Large ribosomal subunit protein uL15, found in Mycoplasmoides gallisepticum (strain R(low / passage 15 / clone 2)) (Mycoplasma gallisepticum).